A 349-amino-acid polypeptide reads, in one-letter code: Diacylglycerol O-acyltransferase 2B (349 aa).

Transmembrane regions (helical) follow at residues 44–64 (ICLIIYLYLFTIPLLWPILIM) and 114–134 (YIMSYHPHGIISMAAFANFAT).

It belongs to the diacylglycerol acyltransferase family.

The protein localises to the endoplasmic reticulum membrane. The catalysed reaction is an acyl-CoA + a 1,2-diacyl-sn-glycerol = a triacyl-sn-glycerol + CoA. The protein operates within glycerolipid metabolism; triacylglycerol biosynthesis. Its function is as follows. Catalyzes the terminal and only committed step in triacylglycerol synthesis by using diacylglycerol and fatty acyl CoA as substrates. Required for storage lipid synthesis. This is Diacylglycerol O-acyltransferase 2B (DGAT2B) from Umbelopsis ramanniana (Oleaginous fungus).